A 237-amino-acid polypeptide reads, in one-letter code: Neural retina-specific leucine zipper protein (237 aa).

Residues lysine 20 and lysine 24 each participate in a glycyl lysine isopeptide (Lys-Gly) (interchain with G-Cter in SUMO) cross-link. The interval 26–64 (EPSEGRSGVPTASLGSTPYSSVPPSPTFSEPGMVGGGEA) is disordered. The tract at residues 30-93 (GRSGVPTASL…SDEVLGLSPD (64 aa)) is minimal transactivation domain (MTD). Residues 159–185 (RLKQRRRTLKNRGYAQACRSKRLQQRR) form a basic motif region. The region spanning 159 to 222 (RLKQRRRTLK…DLYKARCDRL (64 aa)) is the bZIP domain. The segment at 187–208 (LEAERARLAAQLDALRAEVARL) is leucine-zipper.

The protein belongs to the bZIP family. Interacts with FIZ1; this interaction represses transactivation. Interacts (via the leucine-zipper domain) with CRX. In terms of processing, disumoylated at Lys-20. Sumoylation modulates the transcriptional activity of NRL on RHO and NR2E3 promoters, and is required for normal rod differentiation. Phosphorylated. Expressed in the retina (at protein level).

It localises to the cytoplasm. The protein resides in the nucleus. Functionally, acts as a transcriptional activator which regulates the expression of several rod-specific genes, including RHO and PDE6B. Also functions as a transcriptional coactivator, stimulating transcription mediated by the transcription factor CRX and NR2E3. Binds to the rhodopsin promoter in a sequence-specific manner. The chain is Neural retina-specific leucine zipper protein (Nrl) from Mus musculus (Mouse).